A 356-amino-acid polypeptide reads, in one-letter code: S-adenosylmethionine:tRNA ribosyltransferase-isomerase (356 aa).

This sequence belongs to the QueA family. Monomer.

It is found in the cytoplasm. The enzyme catalyses 7-aminomethyl-7-carbaguanosine(34) in tRNA + S-adenosyl-L-methionine = epoxyqueuosine(34) in tRNA + adenine + L-methionine + 2 H(+). Its pathway is tRNA modification; tRNA-queuosine biosynthesis. Its function is as follows. Transfers and isomerizes the ribose moiety from AdoMet to the 7-aminomethyl group of 7-deazaguanine (preQ1-tRNA) to give epoxyqueuosine (oQ-tRNA). The sequence is that of S-adenosylmethionine:tRNA ribosyltransferase-isomerase from Cronobacter sakazakii (strain ATCC BAA-894) (Enterobacter sakazakii).